A 177-amino-acid chain; its full sequence is Large ribosomal subunit protein uL10 (177 aa).

This sequence belongs to the universal ribosomal protein uL10 family. As to quaternary structure, part of the ribosomal stalk of the 50S ribosomal subunit. The N-terminus interacts with L11 and the large rRNA to form the base of the stalk. The C-terminus forms an elongated spine to which L12 dimers bind in a sequential fashion forming a multimeric L10(L12)X complex.

Its function is as follows. Forms part of the ribosomal stalk, playing a central role in the interaction of the ribosome with GTP-bound translation factors. This Mycobacterium leprae (strain Br4923) protein is Large ribosomal subunit protein uL10.